The chain runs to 123 residues: Large ribosomal subunit protein bL12 (123 aa).

The protein belongs to the bacterial ribosomal protein bL12 family. Homodimer. Part of the ribosomal stalk of the 50S ribosomal subunit. Forms a multimeric L10(L12)X complex, where L10 forms an elongated spine to which 2 to 4 L12 dimers bind in a sequential fashion. Binds GTP-bound translation factors.

In terms of biological role, forms part of the ribosomal stalk which helps the ribosome interact with GTP-bound translation factors. Is thus essential for accurate translation. This is Large ribosomal subunit protein bL12 from Neisseria meningitidis serogroup C (strain 053442).